The chain runs to 355 residues: Ubiquinone biosynthesis protein COQ4 homolog, mitochondrial (355 aa).

His134, Asp135, His138, and Glu150 together coordinate Zn(2+).

It belongs to the COQ4 family. In terms of assembly, component of a multi-subunit COQ enzyme complex. Requires Zn(2+) as cofactor.

It is found in the mitochondrion inner membrane. It carries out the reaction a 4-hydroxy-3-methoxy-5-(all-trans-polyprenyl)benzoate + H(+) = a 2-methoxy-6-(all-trans-polyprenyl)phenol + CO2. It functions in the pathway cofactor biosynthesis; ubiquinone biosynthesis. Lyase that catalyzes the C1-decarboxylation of 4-hydroxy-3-methoxy-5-(all-trans-polyprenyl)benzoic acid into 2-methoxy-6-(all-trans-polyprenyl)phenol during ubiquinone biosynthesis. The protein is Ubiquinone biosynthesis protein COQ4 homolog, mitochondrial of Plasmodium chabaudi chabaudi.